We begin with the raw amino-acid sequence, 591 residues long: Formate--tetrahydrofolate ligase (591 aa).

Residue 74–81 (TPLGEGKS) participates in ATP binding.

Belongs to the formate--tetrahydrofolate ligase family.

It catalyses the reaction (6S)-5,6,7,8-tetrahydrofolate + formate + ATP = (6R)-10-formyltetrahydrofolate + ADP + phosphate. It participates in one-carbon metabolism; tetrahydrofolate interconversion. The sequence is that of Formate--tetrahydrofolate ligase from Desulfovibrio desulfuricans (strain ATCC 27774 / DSM 6949 / MB).